The sequence spans 343 residues: Aspartate carbamoyltransferase catalytic subunit (343 aa).

Carbamoyl phosphate is bound by residues arginine 91 and threonine 92. Lysine 119 serves as a coordination point for L-aspartate. Carbamoyl phosphate contacts are provided by arginine 141, histidine 171, and glutamine 174. L-aspartate contacts are provided by arginine 204 and arginine 259. Carbamoyl phosphate-binding residues include glycine 300 and proline 301.

Belongs to the aspartate/ornithine carbamoyltransferase superfamily. ATCase family. As to quaternary structure, heterododecamer (2C3:3R2) of six catalytic PyrB chains organized as two trimers (C3), and six regulatory PyrI chains organized as three dimers (R2).

It catalyses the reaction carbamoyl phosphate + L-aspartate = N-carbamoyl-L-aspartate + phosphate + H(+). Its pathway is pyrimidine metabolism; UMP biosynthesis via de novo pathway; (S)-dihydroorotate from bicarbonate: step 2/3. In terms of biological role, catalyzes the condensation of carbamoyl phosphate and aspartate to form carbamoyl aspartate and inorganic phosphate, the committed step in the de novo pyrimidine nucleotide biosynthesis pathway. This Burkholderia cenocepacia (strain HI2424) protein is Aspartate carbamoyltransferase catalytic subunit.